Here is a 41-residue protein sequence, read N- to C-terminus: Large ribosomal subunit protein bL36 (41 aa).

This sequence belongs to the bacterial ribosomal protein bL36 family.

The sequence is that of Large ribosomal subunit protein bL36 from Gluconobacter oxydans (strain 621H) (Gluconobacter suboxydans).